The chain runs to 444 residues: CBL-interacting serine/threonine-protein kinase 1 (444 aa).

Residues 20 to 275 (YELGRTLGEG…VVGIKASEWF (256 aa)) form the Protein kinase domain. Residues 26–34 (LGEGNFGKV) and K49 each bind ATP. The active-site Proton acceptor is the D143. Residues 161–190 (DFGLSALPQHFRDDGLLHTTCGSPNYVAPE) are activation loop. The residue at position 165 (S165) is a Phosphoserine. Phosphothreonine is present on T179. The NAF domain maps to 313–337 (DSPTIINAFQLIGMSSFLDLSGFFE). Residues 343–372 (ERRIRFTSNSSAKDLLEKIETAVTEMGFSV) are PPI.

The protein belongs to the protein kinase superfamily. CAMK Ser/Thr protein kinase family. SNF1 subfamily. Interacts with CBL1. Interacts with CBL2. Interacts with CBL3. Interacts with CBL9. Interacts with ECT1 and ECT2. Mn(2+) serves as cofactor. Post-translationally, autophosphorylated. As to expression, ubiquitous.

The catalysed reaction is L-seryl-[protein] + ATP = O-phospho-L-seryl-[protein] + ADP + H(+). The enzyme catalyses L-threonyl-[protein] + ATP = O-phospho-L-threonyl-[protein] + ADP + H(+). Functionally, CIPK serine-threonine protein kinases interact with CBL proteins. Binding of a CBL protein to the regulatory NAF domain of CIPK protein lead to the activation of the kinase in a calcium-dependent manner. The protein is CBL-interacting serine/threonine-protein kinase 1 (CIPK1) of Arabidopsis thaliana (Mouse-ear cress).